Consider the following 512-residue polypeptide: Probable cytosol aminopeptidase (512 aa).

The Mn(2+) site is built by Lys-284 and Asp-289. Lys-296 is a catalytic residue. The Mn(2+) site is built by Asp-307, Asp-366, and Glu-368. Arg-370 is a catalytic residue.

It belongs to the peptidase M17 family. The cofactor is Mn(2+).

The protein resides in the cytoplasm. It carries out the reaction Release of an N-terminal amino acid, Xaa-|-Yaa-, in which Xaa is preferably Leu, but may be other amino acids including Pro although not Arg or Lys, and Yaa may be Pro. Amino acid amides and methyl esters are also readily hydrolyzed, but rates on arylamides are exceedingly low.. The catalysed reaction is Release of an N-terminal amino acid, preferentially leucine, but not glutamic or aspartic acids.. Functionally, presumably involved in the processing and regular turnover of intracellular proteins. Catalyzes the removal of unsubstituted N-terminal amino acids from various peptides. This is Probable cytosol aminopeptidase from Cupriavidus necator (strain ATCC 17699 / DSM 428 / KCTC 22496 / NCIMB 10442 / H16 / Stanier 337) (Ralstonia eutropha).